The chain runs to 116 residues: Putative pterin-4-alpha-carbinolamine dehydratase 1 (116 aa).

Belongs to the pterin-4-alpha-carbinolamine dehydratase family.

The catalysed reaction is (4aS,6R)-4a-hydroxy-L-erythro-5,6,7,8-tetrahydrobiopterin = (6R)-L-erythro-6,7-dihydrobiopterin + H2O. The polypeptide is Putative pterin-4-alpha-carbinolamine dehydratase 1 (Cupriavidus pinatubonensis (strain JMP 134 / LMG 1197) (Cupriavidus necator (strain JMP 134))).